The following is a 141-amino-acid chain: Hemoglobin subunit alpha-D (141 aa).

The Globin domain maps to 1-141; it reads VLTAEDKKLI…VAAVLAEKYR (141 aa). His-58 and His-87 together coordinate heme b.

Belongs to the globin family. In terms of assembly, heterotetramer of two alpha-D chains and two beta chains. In terms of tissue distribution, red blood cells.

Functionally, involved in oxygen transport from the lung to the various peripheral tissues. The chain is Hemoglobin subunit alpha-D (HBAD) from Sturnus vulgaris (Starling).